The primary structure comprises 152 residues: Nucleoside diphosphate kinase B (152 aa).

Residues 1–66 (MANLERTFIA…DRPFFPGLVK (66 aa)) form an interaction with AKAP13 region. Residues Lys12, Phe60, Arg88, Thr94, Arg105, and Asn115 each coordinate ATP. His118 (pros-phosphohistidine intermediate) is an active-site residue.

The protein belongs to the NDK family. Hexamer of two different chains: An and B (A6, A5B, A4B2, A3B3, A2B4, AB5, B6). Interacts with CAPN8. Interacts with AKAP13. Interacts with ITGB1BP1 (via C-terminal domain region). Interacts with BCL2L10. It depends on Mg(2+) as a cofactor. Expressed in the base region of the oxyntic and pyloric mucosae.

The protein resides in the cytoplasm. It localises to the cell projection. It is found in the lamellipodium. The protein localises to the ruffle. Its subcellular location is the nucleus. The enzyme catalyses a 2'-deoxyribonucleoside 5'-diphosphate + ATP = a 2'-deoxyribonucleoside 5'-triphosphate + ADP. It catalyses the reaction a ribonucleoside 5'-diphosphate + ATP = a ribonucleoside 5'-triphosphate + ADP. It carries out the reaction ATP + protein L-histidine = ADP + protein N-phospho-L-histidine.. Functionally, major role in the synthesis of nucleoside triphosphates other than ATP. The ATP gamma phosphate is transferred to the NDP beta phosphate via a ping-pong mechanism, using a phosphorylated active-site intermediate. Negatively regulates Rho activity by interacting with AKAP13/LBC. Acts as a transcriptional activator of the MYC gene; binds DNA non-specifically. Binds to both single-stranded guanine- and cytosine-rich strands within the nuclease hypersensitive element (NHE) III(1) region of the MYC gene promoter. Does not bind to duplex NHE III(1). Has G-quadruplex (G4) DNA-binding activity, which is independent of its nucleotide-binding and kinase activity. Binds both folded and unfolded G4 with similar low nanomolar affinities. Stabilizes folded G4s regardless of whether they are prefolded or not. Exhibits histidine protein kinase activity. The chain is Nucleoside diphosphate kinase B (Nme2) from Mus musculus (Mouse).